The sequence spans 431 residues: Serine/threonine-protein kinase Sgk1 (431 aa).

Residues 58–93 (LNLTPPQDPELMNSNPSPPPSPSQQINLGPSSNPSA) form a disordered region. Residues 81–93 (QQINLGPSSNPSA) show a composition bias toward polar residues. The 258-residue stretch at 98-355 (FHFLKVIGKG…FTEIKNHVFF (258 aa)) folds into the Protein kinase domain. ATP-binding positions include 104-112 (IGKGSFGKV) and lysine 127. The active-site Proton acceptor is the aspartate 222. The 76-residue stretch at 356-431 (SPINWDDLNA…SYAPSMDSYL (76 aa)) folds into the AGC-kinase C-terminal domain.

Belongs to the protein kinase superfamily. AGC Ser/Thr protein kinase family.

It localises to the cytoplasm. It is found in the nucleus. The protein localises to the endoplasmic reticulum. The enzyme catalyses L-seryl-[protein] + ATP = O-phospho-L-seryl-[protein] + ADP + H(+). It catalyses the reaction L-threonyl-[protein] + ATP = O-phospho-L-threonyl-[protein] + ADP + H(+). Functionally, protein kinase that may play an important role in cellular stress response. May be involved in the regulation of processes such as cell survival, neuronal excitability and renal sodium excretion. This is Serine/threonine-protein kinase Sgk1 (sgk1) from Fundulus heteroclitus (Killifish).